A 361-amino-acid polypeptide reads, in one-letter code: Phospho-N-acetylmuramoyl-pentapeptide-transferase (361 aa).

10 consecutive transmembrane segments (helical) span residues 27-47 (ILAS…MIRW), 70-90 (GTPT…CLLW), 97-117 (SLWL…VDDY), 134-154 (YFWQ…NASL), 167-187 (TVTW…IVGS), 199-219 (GLAI…AYAS), 236-256 (TGEL…FLWY), 263-283 (VFMG…VAVV), 288-308 (LVLL…ILQV), and 338-358 (KVIV…LATL).

This sequence belongs to the glycosyltransferase 4 family. MraY subfamily. The cofactor is Mg(2+).

It localises to the cell inner membrane. The catalysed reaction is UDP-N-acetyl-alpha-D-muramoyl-L-alanyl-gamma-D-glutamyl-meso-2,6-diaminopimeloyl-D-alanyl-D-alanine + di-trans,octa-cis-undecaprenyl phosphate = di-trans,octa-cis-undecaprenyl diphospho-N-acetyl-alpha-D-muramoyl-L-alanyl-D-glutamyl-meso-2,6-diaminopimeloyl-D-alanyl-D-alanine + UMP. It functions in the pathway cell wall biogenesis; peptidoglycan biosynthesis. Its function is as follows. Catalyzes the initial step of the lipid cycle reactions in the biosynthesis of the cell wall peptidoglycan: transfers peptidoglycan precursor phospho-MurNAc-pentapeptide from UDP-MurNAc-pentapeptide onto the lipid carrier undecaprenyl phosphate, yielding undecaprenyl-pyrophosphoryl-MurNAc-pentapeptide, known as lipid I. The sequence is that of Phospho-N-acetylmuramoyl-pentapeptide-transferase from Legionella pneumophila (strain Lens).